Reading from the N-terminus, the 712-residue chain is Satratoxin biosynthesis SC3 cluster transcription factor SAT20 (712 aa).

4 stretches are compositionally biased toward polar residues: residues 1–10, 25–36, 131–145, and 269–282; these read MPNLPGSSDS, CSSTKPNAAQEN, SEPS…WPSL, and SLPS…SSTG. 3 disordered regions span residues 1-43, 115-145, and 264-294; these read MPNL…ELAQ, SQNA…WPSL, and PVSG…KADR. The zn(2)-C6 fungal-type DNA-binding region spans 306–339; sequence CFRCRMYKENCDPGLPCKNCMRVQVTRRTFFGPC. Residues 530-560 are a coiled coil; sequence QIQIMVAQVMLDKQKNALKRLQERALSKNRH.

Its subcellular location is the nucleus. Its function is as follows. Transcriptional regulator that may regulate the expression of the satratoxin biosynthesis SC3 cluster, one of the 3 clusters involved in the biosynthesis of satratoxins, trichothecene mycotoxins that are associated with human food poisonings. The chain is Satratoxin biosynthesis SC3 cluster transcription factor SAT20 from Stachybotrys chartarum (strain CBS 109288 / IBT 7711) (Toxic black mold).